We begin with the raw amino-acid sequence, 539 residues long: GMP synthase [glutamine-hydrolyzing] (539 aa).

A Glutamine amidotransferase type-1 domain is found at 4 to 202; that stretch reads KILILDFGSQ…VLGIAGCKPD (199 aa). Catalysis depends on C81, which acts as the Nucleophile. Catalysis depends on residues H176 and E178. The 193-residue stretch at 203–395 folds into the GMPS ATP-PPase domain; that stretch reads WVMRDHIEEA…LGLPPEMVYR (193 aa). 230-236 provides a ligand contact to ATP; sequence SGGVDSS.

Homodimer.

It carries out the reaction XMP + L-glutamine + ATP + H2O = GMP + L-glutamate + AMP + diphosphate + 2 H(+). It participates in purine metabolism; GMP biosynthesis; GMP from XMP (L-Gln route): step 1/1. Catalyzes the synthesis of GMP from XMP. The sequence is that of GMP synthase [glutamine-hydrolyzing] from Cupriavidus necator (strain ATCC 17699 / DSM 428 / KCTC 22496 / NCIMB 10442 / H16 / Stanier 337) (Ralstonia eutropha).